The chain runs to 415 residues: MSLQAPKGTKDLLPTESYKWQYLENKFRNIAADFGCREIRTPVFEYTELFQRGVGETTDVVQKEMYTFEDKAGRSITLKPEGTSPAVRAFVEGRLFNETQPTKMYYFTPVMRYENVQKGRLRQHHQFGIEIFGAKDASVDAEVISIPVGIYKELGVEGVELNINSIGCPKCRKTYNEALKKYLSKNYDKLCSTCKTRFDKNPLRILDCKVDTCKEIVKDAPIILDYICGECKEHFESLKNYLDVLNINYKIDPFIVRGLDYYSKTVFEFITDDITICAGGRYDYLIEEIGGPSMPAVGFGMGMERLLLTLQEKAIEIPEEAYVDLYLGNMGDKAKLEVLKLAKELRDRHIKCEIDHMGKSVKAQMKYANRIGAKYSMVLGEEELNTGKATIKKMEDGQQIEVDIKDMDTLIKVFK.

It belongs to the class-II aminoacyl-tRNA synthetase family. In terms of assembly, homodimer.

It is found in the cytoplasm. It catalyses the reaction tRNA(His) + L-histidine + ATP = L-histidyl-tRNA(His) + AMP + diphosphate + H(+). This is Histidine--tRNA ligase from Clostridium botulinum (strain Kyoto / Type A2).